A 557-amino-acid polypeptide reads, in one-letter code: Phosphomethylpyrimidine synthase (557 aa).

Residues Asn-197, Met-226, Tyr-255, His-291, 311-313, 352-355, and Glu-391 contribute to the substrate site; these read SRG and DGLR. His-395 contributes to the Zn(2+) binding site. Residue Tyr-418 participates in substrate binding. His-459 provides a ligand contact to Zn(2+). The [4Fe-4S] cluster site is built by Cys-539, Cys-542, and Cys-547.

It belongs to the ThiC family. In terms of assembly, homodimer. [4Fe-4S] cluster serves as cofactor.

The enzyme catalyses 5-amino-1-(5-phospho-beta-D-ribosyl)imidazole + S-adenosyl-L-methionine = 4-amino-2-methyl-5-(phosphooxymethyl)pyrimidine + CO + 5'-deoxyadenosine + formate + L-methionine + 3 H(+). Its pathway is cofactor biosynthesis; thiamine diphosphate biosynthesis. Catalyzes the synthesis of the hydroxymethylpyrimidine phosphate (HMP-P) moiety of thiamine from aminoimidazole ribotide (AIR) in a radical S-adenosyl-L-methionine (SAM)-dependent reaction. The chain is Phosphomethylpyrimidine synthase from Anaplasma phagocytophilum (strain HZ).